The primary structure comprises 74 residues: Sec-independent protein translocase protein TatA (74 aa).

A helical transmembrane segment spans residues 1 to 21; it reads MGSMSWIHWVIVLGIVALLFG. Residues 51–74 form a disordered region; that stretch reads EVADNKAKSALPRTEAEAEELRKS. Residues 64–74 show a composition bias toward basic and acidic residues; the sequence is TEAEAEELRKS.

It belongs to the TatA/E family. In terms of assembly, the Tat system comprises two distinct complexes: a TatABC complex, containing multiple copies of TatA, TatB and TatC subunits, and a separate TatA complex, containing only TatA subunits. Substrates initially bind to the TatABC complex, which probably triggers association of the separate TatA complex to form the active translocon.

It is found in the cell inner membrane. Part of the twin-arginine translocation (Tat) system that transports large folded proteins containing a characteristic twin-arginine motif in their signal peptide across membranes. TatA could form the protein-conducting channel of the Tat system. This is Sec-independent protein translocase protein TatA from Caulobacter vibrioides (strain ATCC 19089 / CIP 103742 / CB 15) (Caulobacter crescentus).